The chain runs to 379 residues: Small ribosomal subunit protein uS2cy (379 aa).

The N-terminal extension stretch occupies residues 1 to 94 (MKLVQFFEIG…MGTSSNRAKS (94 aa)). Positions 83 to 106 (NQMGTSSNRAKSTDTPAVSTSQNV) are disordered.

This sequence belongs to the universal ribosomal protein uS2 family.

It localises to the plastid. The protein localises to the chloroplast. The polypeptide is Small ribosomal subunit protein uS2cy (rps2-2) (Tetradesmus obliquus (Green alga)).